The primary structure comprises 139 residues: D-ribose pyranase (139 aa).

H20 acts as the Proton donor in catalysis. Residues D28, H106, and 128 to 130 (YAN) each bind substrate.

This sequence belongs to the RbsD / FucU family. RbsD subfamily. As to quaternary structure, homodecamer.

It is found in the cytoplasm. The enzyme catalyses beta-D-ribopyranose = beta-D-ribofuranose. Its pathway is carbohydrate metabolism; D-ribose degradation; D-ribose 5-phosphate from beta-D-ribopyranose: step 1/2. Its function is as follows. Catalyzes the interconversion of beta-pyran and beta-furan forms of D-ribose. The sequence is that of D-ribose pyranase from Actinobacillus pleuropneumoniae serotype 5b (strain L20).